Reading from the N-terminus, the 214-residue chain is Octanoyltransferase (214 aa).

The BPL/LPL catalytic domain occupies 36 to 214; that stretch reads GRESEMVWLL…QQKFDTIFLQ (179 aa). Substrate contacts are provided by residues 75–82, 147–149, and 160–162; these read RGGKYSYH, AFG, and GFS. The active-site Acyl-thioester intermediate is the Cys178.

This sequence belongs to the LipB family.

The protein resides in the cytoplasm. The catalysed reaction is octanoyl-[ACP] + L-lysyl-[protein] = N(6)-octanoyl-L-lysyl-[protein] + holo-[ACP] + H(+). Its pathway is protein modification; protein lipoylation via endogenous pathway; protein N(6)-(lipoyl)lysine from octanoyl-[acyl-carrier-protein]: step 1/2. Catalyzes the transfer of endogenously produced octanoic acid from octanoyl-acyl-carrier-protein onto the lipoyl domains of lipoate-dependent enzymes. Lipoyl-ACP can also act as a substrate although octanoyl-ACP is likely to be the physiological substrate. The polypeptide is Octanoyltransferase (Anaplasma marginale (strain Florida)).